The following is a 181-amino-acid chain: Ribulose bisphosphate carboxylase small subunit, chloroplastic 6 (181 aa).

The N-terminal 57 residues, 1–57 (MASSIVSSAAVATRSNVAQASMVAPFTGLKSAASFPVTKKNNNVDITSLASNGGRVR), are a transit peptide targeting the chloroplast.

It belongs to the RuBisCO small chain family. As to quaternary structure, heterohexadecamer of 8 large and 8 small subunits.

The protein localises to the plastid. It is found in the chloroplast. Functionally, ruBisCO catalyzes two reactions: the carboxylation of D-ribulose 1,5-bisphosphate, the primary event in carbon dioxide fixation, as well as the oxidative fragmentation of the pentose substrate. Both reactions occur simultaneously and in competition at the same active site. Although the small subunit is not catalytic it is essential for maximal activity. This chain is Ribulose bisphosphate carboxylase small subunit, chloroplastic 6, found in Solanum tuberosum (Potato).